The primary structure comprises 445 residues: Na(+)-translocating NADH-quinone reductase subunit A (445 aa).

This sequence belongs to the NqrA family. As to quaternary structure, composed of six subunits; NqrA, NqrB, NqrC, NqrD, NqrE and NqrF.

It catalyses the reaction a ubiquinone + n Na(+)(in) + NADH + H(+) = a ubiquinol + n Na(+)(out) + NAD(+). Functionally, NQR complex catalyzes the reduction of ubiquinone-1 to ubiquinol by two successive reactions, coupled with the transport of Na(+) ions from the cytoplasm to the periplasm. NqrA to NqrE are probably involved in the second step, the conversion of ubisemiquinone to ubiquinol. This chain is Na(+)-translocating NADH-quinone reductase subunit A, found in Pseudomonas aeruginosa (strain UCBPP-PA14).